The following is a 352-amino-acid chain: Ion-translocating oxidoreductase complex subunit D (352 aa).

Helical transmembrane passes span 20-40, 42-62, 89-109, and 123-143; these read IMLL…WFFG, GTLV…ALVL, IPPL…VIIA, and PAMI…TSWL. T187 bears the FMN phosphoryl threonine mark. 5 helical membrane-spanning segments follow: residues 214 to 234, 242 to 262, 267 to 287, 301 to 321, and 322 to 342; these read ILAG…GVWL, WHIP…GWLF, LAAP…FFIL, LIFG…GGYP, and DGVA…DYYT.

Belongs to the NqrB/RnfD family. In terms of assembly, the complex is composed of six subunits: RsxA, RsxB, RsxC, RsxD, RsxE and RsxG. FMN is required as a cofactor.

The protein resides in the cell inner membrane. Its function is as follows. Part of a membrane-bound complex that couples electron transfer with translocation of ions across the membrane. Required to maintain the reduced state of SoxR. This chain is Ion-translocating oxidoreductase complex subunit D, found in Escherichia coli O81 (strain ED1a).